Consider the following 244-residue polypeptide: Protein IN2-1 homolog B (244 aa).

Residues 1 to 27 (MAAAAAAPASSEKEVLPPSLTSSSEPP) form a disordered region. A GST N-terminal domain is found at 32–113 (GTTRLYVAYH…YIDTNFEGPA (82 aa)). Glutathione is bound by residues Val-85 and 97 to 98 (ES). The GST C-terminal domain occupies 118 to 241 (DSEKQQFAEE…FLLEHTKKRL (124 aa)).

In Oryza sativa subsp. indica (Rice), this protein is Protein IN2-1 homolog B (GSTZ5).